The primary structure comprises 197 residues: RILP-like protein 2 (197 aa).

The tract at residues 1-24 is disordered; sequence MEDHPVREEEDGEEDEGALAKSPL. Acidic residues predominate over residues 8 to 17; the sequence is EEEDGEEDEG. Residues 14–96 enclose the RH1 domain; that stretch reads EDEGALAKSP…KQEVEGLRKA (83 aa). The stretch at 69–153 forms a coiled coil; it reads VNEGSLAVEE…VQEELQCYRS (85 aa). The RH2 domain occupies 119-184; the sequence is RPRFTLQELR…GNGEKEERTI (66 aa).

This sequence belongs to the RILPL family. In terms of assembly, homodimer. Interacts with RAC1. Interacts (via N-terminus) with MYO5A, the interaction is required for its role in dendrite formation. Interacts with RAB8A; interaction is dependent on the phosphorylation of RAB8A on 'Thr-72'. Interacts with RAB10 and RAB12; interaction is dependent on the phosphorylation of 'Thr-73' on RAB10 and 'Ser-105' on RAB12.

The protein localises to the cytoplasm. It is found in the cytosol. Its subcellular location is the cytoskeleton. The protein resides in the microtubule organizing center. It localises to the centrosome. The protein localises to the cell projection. It is found in the cilium. In terms of biological role, involved in cell shape and neuronal morphogenesis, positively regulating the establishment and maintenance of dendritic spines. Plays a role in cellular protein transport, including protein transport away from primary cilia. May function via activation of RAC1 and PAK1. This chain is RILP-like protein 2 (Rilpl2), found in Mus musculus (Mouse).